Consider the following 563-residue polypeptide: (-)-germacrene D synthase (563 aa).

A coiled-coil region spans residues 44–71 (TEITAAEKEELEKQKEKVKNLLDQTPND). 2 residues coordinate Mn(2+): aspartate 314 and aspartate 318. The DDXXD motif signature appears at 314-318 (DDIYD). 2 homodimerization regions span residues 320–326 (YGSLDEL) and 392–429 (EAEWCFSKYFPTMEEYMKQALVSGAYMMLSTTSLVGME). Residues aspartate 459 and glutamate 467 each coordinate Mn(2+).

This sequence belongs to the terpene synthase family. In terms of assembly, homodimer. Requires Mn(2+) as cofactor. It depends on Mg(2+) as a cofactor. As to expression, expressed in peltate glandular trichomes. Present at low levels in flowers, leaves and stems.

The enzyme catalyses (2E,6E)-farnesyl diphosphate = (-)-germacrene D + diphosphate. Its pathway is secondary metabolite biosynthesis; terpenoid biosynthesis. Functionally, involved in the biosynthesis of phenolic sesquiterpenes natural products. Sesquiterpene synthase that catalyzes mainly the formation of (-)-germacrene D and minor amounts of other sesquiterpenes (e.g. bicyclo-germacrene) from farnesyl diphosphate (FPP). Also triggers moderate amounts formation of myrcene, limonene, terpinolene and linalool in the presence of geranyl diphosphate (GPP). In Origanum vulgare (Wild marjoram), this protein is (-)-germacrene D synthase.